The following is a 209-amino-acid chain: FMN-dependent NADH:quinone oxidoreductase (209 aa).

FMN contacts are provided by residues serine 9 and 15 to 17 (SNS).

This sequence belongs to the azoreductase type 1 family. As to quaternary structure, homodimer. The cofactor is FMN.

The enzyme catalyses 2 a quinone + NADH + H(+) = 2 a 1,4-benzosemiquinone + NAD(+). It catalyses the reaction N,N-dimethyl-1,4-phenylenediamine + anthranilate + 2 NAD(+) = 2-(4-dimethylaminophenyl)diazenylbenzoate + 2 NADH + 2 H(+). Functionally, quinone reductase that provides resistance to thiol-specific stress caused by electrophilic quinones. Its function is as follows. Also exhibits azoreductase activity. Catalyzes the reductive cleavage of the azo bond in aromatic azo compounds to the corresponding amines. This Bordetella bronchiseptica (strain ATCC BAA-588 / NCTC 13252 / RB50) (Alcaligenes bronchisepticus) protein is FMN-dependent NADH:quinone oxidoreductase.